Reading from the N-terminus, the 551-residue chain is Endolytic murein transglycosylase (551 aa).

Residues 1–187 lie on the Cytoplasmic side of the membrane; the sequence is MSEKSREEEK…PKKEKKSHVK (187 aa). Residues 38–180 are disordered; that stretch reads VRTPANEPSA…EGAKPAKPKK (143 aa). Low complexity-rich tracts occupy residues 100-110 and 145-157; these read PSSPAEESGSR and QAGP…ATET. Residues 159-174 are compositionally biased toward basic and acidic residues; that stretch reads DIIRDTSRRSRREGAK. The chain crosses the membrane as a helical span at residues 188–208; it reads AFVISFLVFLALLSAGGYFGY. Residues 209-551 are Extracellular-facing; it reads QYVLDSLLPI…VAEHVNSKLN (343 aa).

This sequence belongs to the transglycosylase MltG family.

It localises to the cell membrane. The catalysed reaction is a peptidoglycan chain = a peptidoglycan chain with N-acetyl-1,6-anhydromuramyl-[peptide] at the reducing end + a peptidoglycan chain with N-acetylglucosamine at the non-reducing end.. Its function is as follows. Functions as a peptidoglycan terminase that cleaves nascent peptidoglycan strands endolytically to terminate their elongation. Involved in peripheral peptidoglycan (PG) synthesis. In Streptococcus pneumoniae serotype 2 (strain D39 / NCTC 7466), this protein is Endolytic murein transglycosylase.